Reading from the N-terminus, the 767-residue chain is General transcription and DNA repair factor IIH helicase/translocase subunit XPB1 (767 aa).

Positions Met-1–Asp-51 are disordered. Acidic residues predominate over residues Asp-31–Arg-41. Positions Asp-42–Asp-51 are enriched in basic and acidic residues. Residues Met-293–Leu-455 form the Helicase ATP-binding domain. ATP is bound at residue Leu-306–Ser-313. A DEVH box motif is present at residues Asp-408 to His-411. The region spanning Arg-510–Ser-676 is the Helicase C-terminal domain. Residues Arg-742–Val-767 are disordered. Residues Lys-750–Tyr-766 carry the Nuclear localization signal motif. Residues Arg-758 to Val-767 show a composition bias toward basic residues.

Belongs to the helicase family. RAD25/XPB subfamily. In terms of assembly, component of the 7-subunit TFIIH core complex composed of XPB, XPD, TFB1/GTF2H1, GTF2H2/P44, TFB4/GTF2H3, TFB2/GTF2H4 and TFB5/GTF2H5, which is active in NER. The core complex associates with the 3-subunit CDK-activating kinase (CAK) module composed of CYCH1/cyclin H1, CDKD and MAT1/At4g30820 to form the 10-subunit holoenzyme (holo-TFIIH) active in transcription. In terms of tissue distribution, expressed ubiquitously.

The protein localises to the nucleus. It catalyses the reaction Couples ATP hydrolysis with the unwinding of duplex DNA by translocating in the 3'-5' direction.. The catalysed reaction is ATP + H2O = ADP + phosphate + H(+). In terms of biological role, ATP-dependent 3'-5' DNA helicase/translocase; binds dsDNA rather than ssDNA, unzipping it in a translocase rather than classical helicase activity. Component of the general transcription and DNA repair factor IIH (TFIIH) core complex. When complexed to CDK-activating kinase (CAK), involved in RNA transcription by RNA polymerase II. The ATPase activity of XPB/ERCC3, but not its helicase activity, is required for DNA opening; it may wrap around the damaged DNA wedging it open, causing localized melting and twisting that allows XPD/ERCC2 helicase to anchor. The ATP-dependent helicase activity of XPB/ERCC3 may be required for promoter escape. Also involved in transcription-coupled nucleotide excision repair (NER) of damaged DNA. In NER, TFIIH acts by opening DNA around the lesion to allow the excision of the damaged oligonucleotide and its replacement by a new DNA fragment. The structure of the TFIIH transcription complex differs from the NER-TFIIH complex. Partially complements UV sensitivity of a yeast SSL2 mutation. Required during the early stages of development, including seed germination. This chain is General transcription and DNA repair factor IIH helicase/translocase subunit XPB1 (XPB1), found in Arabidopsis thaliana (Mouse-ear cress).